The sequence spans 244 residues: Type III pantothenate kinase (244 aa).

Residue 9–16 participates in ATP binding; sequence DAGNSSLK. Substrate-binding positions include Tyr90 and 97-100; that span reads GVDR. Asp99 acts as the Proton acceptor in catalysis. Position 122 (Thr122) interacts with ATP. Thr172 contributes to the substrate binding site.

Belongs to the type III pantothenate kinase family. As to quaternary structure, homodimer. Requires NH4(+) as cofactor. The cofactor is K(+).

The protein resides in the cytoplasm. The catalysed reaction is (R)-pantothenate + ATP = (R)-4'-phosphopantothenate + ADP + H(+). It functions in the pathway cofactor biosynthesis; coenzyme A biosynthesis; CoA from (R)-pantothenate: step 1/5. Catalyzes the phosphorylation of pantothenate (Pan), the first step in CoA biosynthesis. This chain is Type III pantothenate kinase, found in Thiobacillus denitrificans (strain ATCC 25259 / T1).